Consider the following 144-residue polypeptide: Conopressin-conophysin (144 aa).

A signal peptide spans 1–27 (MTRSALQMGRLTLVLCLLLQLVLVTQA). An intrachain disulfide couples Cys28 to Cys33. Asp36 bears the Aspartic acid 1-amide mark. The propeptide occupies 37–44 (GERDVDGR). Cystine bridges form between Cys50-Cys90, Cys53-Cys64, Cys58-Cys80, Cys65-Cys70, Cys97-Cys117, Cys109-Cys129, and Cys118-Cys123. The propeptide occupies 131–144 (KESKSGIRVGCQRS).

This sequence belongs to the vasopressin/oxytocin family. Expressed by the venom duct.

The protein resides in the secreted. This Conus bayani (Bayan's cone) protein is Conopressin-conophysin.